Here is a 325-residue protein sequence, read N- to C-terminus: MLPTLTALLCLGLCLSQRINTEKETLPKPIIWAKPSIMVTNGNSVNIWCQGAQSASEYQLYFEGSFFALERPKPSRSMNKVRFFISQMTSHTAGIYTCFYQSGELWSKSSNPLKLVVTGLYDTPNLWVYPRPEVTLGENVTFFCQLKTATSKFFLLKERGSNHIQNKYGNIQAEFPMGPVTRAHRGTYRCFGSYNDYAWSFPSEPVTLLITGGVENSSLAPTDPTSSLDYWEFDLSTNESGLQKDSAFWDHTTQNLIRIGLACIILITLVWLLTEDWLSKRKDHEEANRLTNWECRRRWRMQHYFEEEQRNAISMMELKATPGAL.

Residues 1–16 (MLPTLTALLCLGLCLS) form the signal peptide. The Extracellular portion of the chain corresponds to 17-255 (QRINTEKETL…SAFWDHTTQN (239 aa)). 2 Ig-like domains span residues 34–118 (KPSI…LVVT) and 129–211 (YPRP…LLIT). A disulfide bridge links cysteine 49 with cysteine 98. An N-linked (GlcNAc...) asparagine glycan is attached at asparagine 139. Cysteine 144 and cysteine 190 are disulfide-bonded. Residues asparagine 216 and asparagine 238 are each glycosylated (N-linked (GlcNAc...) asparagine). A helical transmembrane segment spans residues 256–273 (LIRIGLACIILITLVWLL). The Cytoplasmic portion of the chain corresponds to 274-325 (TEDWLSKRKDHEEANRLTNWECRRRWRMQHYFEEEQRNAISMMELKATPGAL).

It belongs to the natural cytotoxicity receptor (NCR) family. In terms of assembly, interacts with CD3Z and FCER1G. Selectively expressed by NK cells.

It localises to the cell membrane. Cytotoxicity-activating receptor that may contribute to the increased efficiency of activated natural killer (NK) cells to mediate tumor cell lysis. The polypeptide is Natural cytotoxicity triggering receptor 1 (Ncr1) (Mus musculus (Mouse)).